The chain runs to 343 residues: uncharacterized protein (343 aa).

Disordered regions lie at residues 1-25 (MSSK…LSGT), 62-119 (KNIR…DCSD), and 169-188 (NPKI…TKKS). Residues 62-71 (KNIRQFKKSQ) show a composition bias toward basic residues. The segment covering 72–81 (NKTDTEKSGE) has biased composition (basic and acidic residues). A compositionally biased stretch (acidic residues) spans 83–107 (NDSDYSDYSDNSDDVDDLDDVDDLN).

This is an uncharacterized protein from Acanthamoeba polyphaga (Amoeba).